The primary structure comprises 491 residues: UDP-N-acetylmuramate--L-alanine ligase (491 aa).

126–132 (GTHGKTT) is an ATP binding site.

This sequence belongs to the MurCDEF family.

The protein localises to the cytoplasm. It catalyses the reaction UDP-N-acetyl-alpha-D-muramate + L-alanine + ATP = UDP-N-acetyl-alpha-D-muramoyl-L-alanine + ADP + phosphate + H(+). It functions in the pathway cell wall biogenesis; peptidoglycan biosynthesis. Functionally, cell wall formation. The polypeptide is UDP-N-acetylmuramate--L-alanine ligase (Klebsiella pneumoniae subsp. pneumoniae (strain ATCC 700721 / MGH 78578)).